The chain runs to 65 residues: uncharacterized protein (65 aa).

An N-terminal signal peptide occupies residues 1 to 22 (MKFIKLFTFLVYLFVTLTNVFA).

This is an uncharacterized protein from Invertebrate iridescent virus 6 (IIV-6).